Here is a 145-residue protein sequence, read N- to C-terminus: D-aminoacyl-tRNA deacylase (145 aa).

The Gly-cisPro motif, important for rejection of L-amino acids signature appears at 137 to 138 (GP).

The protein belongs to the DTD family. In terms of assembly, homodimer.

The protein resides in the cytoplasm. The catalysed reaction is glycyl-tRNA(Ala) + H2O = tRNA(Ala) + glycine + H(+). It carries out the reaction a D-aminoacyl-tRNA + H2O = a tRNA + a D-alpha-amino acid + H(+). In terms of biological role, an aminoacyl-tRNA editing enzyme that deacylates mischarged D-aminoacyl-tRNAs. Also deacylates mischarged glycyl-tRNA(Ala), protecting cells against glycine mischarging by AlaRS. Acts via tRNA-based rather than protein-based catalysis; rejects L-amino acids rather than detecting D-amino acids in the active site. By recycling D-aminoacyl-tRNA to D-amino acids and free tRNA molecules, this enzyme counteracts the toxicity associated with the formation of D-aminoacyl-tRNA entities in vivo and helps enforce protein L-homochirality. The polypeptide is D-aminoacyl-tRNA deacylase (Cronobacter sakazakii (strain ATCC BAA-894) (Enterobacter sakazakii)).